The following is a 493-amino-acid chain: uncharacterized protein (493 aa).

Residues 96–124 form a disordered region; that stretch reads TTVAKASPPPAKPASAPTEITWKGSPQFT.

This is an uncharacterized protein from Caulobacter vibrioides (strain ATCC 19089 / CIP 103742 / CB 15) (Caulobacter crescentus).